Reading from the N-terminus, the 549-residue chain is Dihydroxy-acid dehydratase (549 aa).

Residue aspartate 78 participates in Mg(2+) binding. Cysteine 119 contributes to the [2Fe-2S] cluster binding site. Mg(2+) contacts are provided by aspartate 120 and lysine 121. Lysine 121 bears the N6-carboxylysine mark. Cysteine 192 provides a ligand contact to [2Fe-2S] cluster. Glutamate 439 lines the Mg(2+) pocket. Residue serine 465 is the Proton acceptor of the active site.

The protein belongs to the IlvD/Edd family. In terms of assembly, homodimer. The cofactor is [2Fe-2S] cluster. Mg(2+) serves as cofactor.

The enzyme catalyses (2R)-2,3-dihydroxy-3-methylbutanoate = 3-methyl-2-oxobutanoate + H2O. It catalyses the reaction (2R,3R)-2,3-dihydroxy-3-methylpentanoate = (S)-3-methyl-2-oxopentanoate + H2O. It participates in amino-acid biosynthesis; L-isoleucine biosynthesis; L-isoleucine from 2-oxobutanoate: step 3/4. Its pathway is amino-acid biosynthesis; L-valine biosynthesis; L-valine from pyruvate: step 3/4. Functions in the biosynthesis of branched-chain amino acids. Catalyzes the dehydration of (2R,3R)-2,3-dihydroxy-3-methylpentanoate (2,3-dihydroxy-3-methylvalerate) into 2-oxo-3-methylpentanoate (2-oxo-3-methylvalerate) and of (2R)-2,3-dihydroxy-3-methylbutanoate (2,3-dihydroxyisovalerate) into 2-oxo-3-methylbutanoate (2-oxoisovalerate), the penultimate precursor to L-isoleucine and L-valine, respectively. The protein is Dihydroxy-acid dehydratase of Endomicrobium trichonymphae.